Consider the following 644-residue polypeptide: Exoribonuclease 2 (644 aa).

The RNB domain occupies 189-516; the sequence is REDLTALDFV…NHRLLKAVIK (328 aa). Positions 561 to 643 constitute an S1 motif domain; sequence DTRFAAEIVD…ETRSIIARPV (83 aa).

The protein belongs to the RNR ribonuclease family. RNase II subfamily.

It localises to the cytoplasm. It catalyses the reaction Exonucleolytic cleavage in the 3'- to 5'-direction to yield nucleoside 5'-phosphates.. Its function is as follows. Involved in mRNA degradation. Hydrolyzes single-stranded polyribonucleotides processively in the 3' to 5' direction. This Shigella boydii serotype 18 (strain CDC 3083-94 / BS512) protein is Exoribonuclease 2.